Reading from the N-terminus, the 82-residue chain is Omega-ctenitoxin-Pn1a (82 aa).

Positions 1–21 (MWLKIQVFLLAITLITLGIQA) are cleaved as a signal peptide. The propeptide occupies 22-37 (EPNSSPNNPLIEEEAR). Disulfide bonds link Cys-39/Cys-54, Cys-46/Cys-59, Cys-53/Cys-70, and Cys-61/Cys-68. Positions 72-82 (KKFIEFFGGGK) are excised as a propeptide.

This sequence belongs to the neurotoxin 02 (plectoxin) family. In terms of tissue distribution, expressed by the venom gland.

It is found in the secreted. In terms of biological role, antagonist of L-type calcium channels (Cav1/CACNA1). Induces immediate clockwise gyration and flaccid paralysis after 6 hours at dose levels of 5 ug per mouse. In Phoneutria nigriventer (Brazilian armed spider), this protein is Omega-ctenitoxin-Pn1a.